We begin with the raw amino-acid sequence, 305 residues long: MRHLLTLMEYKPHEVENILRMSRDFKTRYLAGEVYTPIFPGRLVVLYFEKPSTRTRLSLTAAAAQLGMQAVYTTPSELQIGRGETIADTMRVLSRYAVAVAARVYRHETLEEMAQNSSISVINALSDKHHPLQALADALTLWEYVGKLHGIKVAFVGDVSNNVATSLAIIGAKLGWEVRLVGPKQLWNMKLVEELSEDLAKTGGRIYFTDSINDVAGVDGVYTDVWVSMGFEKEAEERRRMLKPYQVNQRVMEIAGRKAIFLHCLPAHRGEEVTDDVIDGPQSVVWDQAENRMHTAKAVFAYLLR.

Carbamoyl phosphate contacts are provided by residues 52–55 (STRT), glutamine 79, arginine 103, and 130–133 (HPLQ). Residues asparagine 162, aspartate 224, and 228–229 (SM) each bind L-ornithine. Residues 264–265 (CL) and arginine 292 contribute to the carbamoyl phosphate site.

This sequence belongs to the aspartate/ornithine carbamoyltransferase superfamily. OTCase family.

It localises to the cytoplasm. It carries out the reaction carbamoyl phosphate + L-ornithine = L-citrulline + phosphate + H(+). It functions in the pathway amino-acid biosynthesis; L-arginine biosynthesis; L-arginine from L-ornithine and carbamoyl phosphate: step 1/3. Functionally, reversibly catalyzes the transfer of the carbamoyl group from carbamoyl phosphate (CP) to the N(epsilon) atom of ornithine (ORN) to produce L-citrulline. This Pyrobaculum islandicum (strain DSM 4184 / JCM 9189 / GEO3) protein is Ornithine carbamoyltransferase.